We begin with the raw amino-acid sequence, 547 residues long: Chaperonin GroEL (547 aa).

Residues 30 to 33, K51, 87 to 91, G415, and D496 each bind ATP; these read TLGP and DGTTT.

The protein belongs to the chaperonin (HSP60) family. Forms a cylinder of 14 subunits composed of two heptameric rings stacked back-to-back. Interacts with the co-chaperonin GroES.

It is found in the cytoplasm. It carries out the reaction ATP + H2O + a folded polypeptide = ADP + phosphate + an unfolded polypeptide.. Together with its co-chaperonin GroES, plays an essential role in assisting protein folding. The GroEL-GroES system forms a nano-cage that allows encapsulation of the non-native substrate proteins and provides a physical environment optimized to promote and accelerate protein folding. The protein is Chaperonin GroEL of Pelodictyon phaeoclathratiforme (strain DSM 5477 / BU-1).